We begin with the raw amino-acid sequence, 336 residues long: NADH-cytochrome b5 reductase 2 (336 aa).

Residues 28–50 (GGSSNGALYVGIGAAGLAGAYIY) form a helical membrane-spanning segment. One can recognise an FAD-binding FR-type domain in the interval 84 to 189 (QGFISLLLDK…KGPIPKYPWS (106 aa)). 192–227 (KHEHIALIAGGTGITPMWQTARAIFKNPEDKTKVTL) is an FAD binding site.

The protein belongs to the flavoprotein pyridine nucleotide cytochrome reductase family. The cofactor is FAD.

Its subcellular location is the mitochondrion outer membrane. The enzyme catalyses 2 Fe(III)-[cytochrome b5] + NADH = 2 Fe(II)-[cytochrome b5] + NAD(+) + H(+). May mediate the reduction of outer membrane cytochrome b5. This is NADH-cytochrome b5 reductase 2 (MCR1) from Phaeosphaeria nodorum (strain SN15 / ATCC MYA-4574 / FGSC 10173) (Glume blotch fungus).